The chain runs to 174 residues: MALDNATVLERLRAALPDAILGSAEFRGDLSVYVRPERIVDVARFLRDDPELRFNFLENLCGVDYLGREPRFEVVYHLISFTNRSRICLKVGVDEHNPSVPSLTGLWPGANYHERETFDMFGIIFTGHPCLERILMPEDWEGHPLRKDVPLGAEEVAFTFNQDRIYAHKPFAKE.

Belongs to the complex I 30 kDa subunit family. As to quaternary structure, NDH-1 is composed of 14 different subunits. Subunits NuoB, C, D, E, F, and G constitute the peripheral sector of the complex.

Its subcellular location is the cell membrane. The enzyme catalyses a quinone + NADH + 5 H(+)(in) = a quinol + NAD(+) + 4 H(+)(out). NDH-1 shuttles electrons from NADH, via FMN and iron-sulfur (Fe-S) centers, to quinones in the respiratory chain. The immediate electron acceptor for the enzyme in this species is believed to be ubiquinone. Couples the redox reaction to proton translocation (for every two electrons transferred, four hydrogen ions are translocated across the cytoplasmic membrane), and thus conserves the redox energy in a proton gradient. The polypeptide is NADH-quinone oxidoreductase subunit C (Roseiflexus sp. (strain RS-1)).